A 453-amino-acid chain; its full sequence is MQEWLEILLIHTLIDSSSLSPQRLRVMNRIISSQGSDLIKQKLSQHTSFFGIKLWILITASASIAFLLVLIISVLLCFIFHRRRCSQEPFRLRSKLCLPLSHIPLTNKQQIPYNRCGDDIESQRISQVGWSSARLSYYTRSFSSTGSFGSFNVFTFMEIKNVTDSFADDNVITKGDSSTVYRGILMGTVTVAVKRFLPSNSRYEDKDFITKAEMIANVRHKNVVRLLGYCIEGDERVLVYEYAEKGDLHEWLHGSAGRNRPLTWRKRMKIIQGVAKGLAYIHEDIEPKITHQDIRPSKILLDYQWNPKILDVGFIGHSDIPTLIPSPGNMDEKIDVYSFGNMIMELVSGRVSVDQSSPHVRVYLVDWIKEMVANHMIVDVLDPSLPEFPTIKELKRIVLISLRCVDPELKERPKMGDVIHMLQPHDLLLNNNAIQKAQKITRSHEVSAISIRQ.

A helical transmembrane segment spans residues 60-80 (ASASIAFLLVLIISVLLCFIF). At Thr-155 the chain carries Phosphothreonine. In terms of domain architecture, Protein kinase spans 166 to 428 (FADDNVITKG…IHMLQPHDLL (263 aa)). ATP-binding positions include 172-180 (ITKGDSSTV) and Lys-194. Tyr-240 bears the Phosphotyrosine mark. Asp-293 serves as the catalytic Proton acceptor. Ser-297 carries the phosphoserine modification. Thr-322 is modified (phosphothreonine).

The protein belongs to the protein kinase superfamily.

It is found in the cell membrane. It catalyses the reaction L-seryl-[protein] + ATP = O-phospho-L-seryl-[protein] + ADP + H(+). The enzyme catalyses L-threonyl-[protein] + ATP = O-phospho-L-threonyl-[protein] + ADP + H(+). This Arabidopsis thaliana (Mouse-ear cress) protein is Putative receptor-like protein kinase At2g30940.